Consider the following 728-residue polypeptide: Catalase-peroxidase 1 (728 aa).

The segment at residues 91–218 is a cross-link (tryptophyl-tyrosyl-methioninium (Trp-Tyr) (with M-244)); that stretch reads WHSAGTYRTA…LAAVQMGLIY (128 aa). The active-site Proton acceptor is histidine 92. The segment at residues 218–244 is a cross-link (tryptophyl-tyrosyl-methioninium (Tyr-Met) (with W-91)); it reads YVNPEGPDGNPDPVAAARDIRDTFARM. Histidine 259 lines the heme b pocket.

It belongs to the peroxidase family. Peroxidase/catalase subfamily. In terms of assembly, homodimer or homotetramer. Heme b serves as cofactor. In terms of processing, formation of the three residue Trp-Tyr-Met cross-link is important for the catalase, but not the peroxidase activity of the enzyme.

It carries out the reaction H2O2 + AH2 = A + 2 H2O. The enzyme catalyses 2 H2O2 = O2 + 2 H2O. In terms of biological role, bifunctional enzyme with both catalase and broad-spectrum peroxidase activity. In Burkholderia ambifaria (strain MC40-6), this protein is Catalase-peroxidase 1.